Consider the following 281-residue polypeptide: uncharacterized protein (281 aa).

The next 3 membrane-spanning stretches (helical) occupy residues 23–45, 65–87, and 94–116; these read LLLSYIINLISSIIILIIGFFAA, IANFLAALVRYIIITFALIASLG, and TSVIAILGAAGMAIGLALQGSLS.

Belongs to the MscS (TC 1.A.23) family.

Its subcellular location is the cell membrane. This is an uncharacterized protein from Buchnera aphidicola subsp. Baizongia pistaciae (strain Bp).